Here is a 524-residue protein sequence, read N- to C-terminus: Alkaline phosphatase, tissue-nonspecific isozyme (524 aa).

Positions 1–17 (MISPFLVLAIGTCLTNS) are cleaved as a signal peptide. D60 lines the Mg(2+) pocket. Residues D60 and S110 each coordinate Zn(2+). S110 serves as the catalytic Phosphoserine intermediate. S110 is subject to Phosphoserine. The cysteines at positions 139 and 201 are disulfide-linked. N-linked (GlcNAc...) asparagine glycosylation is present at N140. Position 173 (T173) interacts with Mg(2+). A glycan (N-linked (GlcNAc...) asparagine) is linked at N230. E235 is a binding site for Ca(2+). Residue N271 is glycosylated (N-linked (GlcNAc...) asparagine). Residues F290 and E291 each coordinate Ca(2+). N302 carries an N-linked (GlcNAc...) asparagine glycan. A Ca(2+)-binding site is contributed by D306. E332 lines the Mg(2+) pocket. Residues D337, H341, D378, and H379 each contribute to the Zn(2+) site. The N-linked (GlcNAc...) asparagine glycan is linked to N430. H454 contacts Zn(2+). C489 and C497 are joined by a disulfide. S499 carries the GPI-anchor amidated serine lipid modification. Residues 500-524 (ASSAGGPSPGPLFLLLALPSLGILF) constitute a propeptide, removed in mature form.

This sequence belongs to the alkaline phosphatase family. As to quaternary structure, homodimer. Mg(2+) is required as a cofactor. Requires Zn(2+) as cofactor. The cofactor is Ca(2+). Post-translationally, N-glycosylated.

The protein resides in the cell membrane. It is found in the extracellular vesicle membrane. The protein localises to the mitochondrion membrane. It localises to the mitochondrion intermembrane space. It carries out the reaction a phosphate monoester + H2O = an alcohol + phosphate. It catalyses the reaction diphosphate + H2O = 2 phosphate + H(+). The catalysed reaction is pyridoxal 5'-phosphate + H2O = pyridoxal + phosphate. The enzyme catalyses phosphoethanolamine + H2O = ethanolamine + phosphate. It carries out the reaction N-phosphocreatine + H2O = creatine + phosphate. It catalyses the reaction ATP + H2O = ADP + phosphate + H(+). The catalysed reaction is ADP + H2O = AMP + phosphate + H(+). The enzyme catalyses AMP + H2O = adenosine + phosphate. Its activity is regulated as follows. Phosphatase activity is specifically inhibited by 5-((5-chloro-2-methoxyphenyl)sulfonamido)nicotinamide (SBI-425). Alkaline phosphatase that metabolizes various phosphate compounds and plays a key role in skeletal mineralization and adaptive thermogenesis. Has broad substrate specificity and can hydrolyze a considerable variety of compounds: however, only a few substrates, such as diphosphate (inorganic pyrophosphate; PPi), pyridoxal 5'-phosphate (PLP) and N-phosphocreatine are natural substrates. Plays an essential role in skeletal and dental mineralization via its ability to hydrolyze extracellular diphosphate, a potent mineralization inhibitor, to phosphate: it thereby promotes hydroxyapatite crystal formation and increases inorganic phosphate concentration. Acts in a non-redundant manner with PHOSPHO1 in skeletal mineralization: while PHOSPHO1 mediates the initiation of hydroxyapatite crystallization in the matrix vesicles (MVs), ALPL/TNAP catalyzes the spread of hydroxyapatite crystallization in the extracellular matrix. Also promotes dephosphorylation of osteopontin (SSP1), an inhibitor of hydroxyapatite crystallization in its phosphorylated state; it is however unclear whether ALPL/TNAP mediates SSP1 dephosphorylation via a direct or indirect manner. Catalyzes dephosphorylation of PLP to pyridoxal (PL), the transportable form of vitamin B6, in order to provide a sufficient amount of PLP in the brain, an essential cofactor for enzymes catalyzing the synthesis of diverse neurotransmitters. Additionally, also able to mediate ATP degradation in a stepwise manner to adenosine, thereby regulating the availability of ligands for purinergic receptors. Also capable of dephosphorylating microbial products, such as lipopolysaccharides (LPS) as well as other phosphorylated small-molecules, such as poly-inosine:cytosine (poly I:C). Acts as a key regulator of adaptive thermogenesis as part of the futile creatine cycle: localizes to the mitochondria of thermogenic fat cells and acts by mediating hydrolysis of N-phosphocreatine to initiate a futile cycle of creatine dephosphorylation and phosphorylation. During the futile creatine cycle, creatine and N-phosphocreatine are in a futile cycle, which dissipates the high energy charge of N-phosphocreatine as heat without performing any mechanical or chemical work. The chain is Alkaline phosphatase, tissue-nonspecific isozyme (ALPL) from Felis catus (Cat).